Reading from the N-terminus, the 850-residue chain is Penicillin-binding protein 1A (850 aa).

The Cytoplasmic segment spans residues 1–5; sequence MKFVK. Residues 6 to 26 form a helical; Signal-anchor for type II membrane protein membrane-spanning segment; it reads YFLILAVCCILLGAGSIYGLY. Residues 27 to 850 are Periplasmic-facing; it reads RYIEPQLPDV…IDNGEAQELF (824 aa). The interval 48–216 is transglycosylase; sequence MQIYSADGEL…STFNPLYSMD (169 aa). Glu86 acts as the Proton donor; for transglycosylase activity in catalysis. The tract at residues 400–710 is transpeptidase; it reads DVLQTGQQIW…GWRAGRDLQR (311 aa). The Acyl-ester intermediate; for transpeptidase activity role is filled by Ser465.

This sequence in the N-terminal section; belongs to the glycosyltransferase 51 family. It in the C-terminal section; belongs to the transpeptidase family.

It is found in the cell inner membrane. The catalysed reaction is [GlcNAc-(1-&gt;4)-Mur2Ac(oyl-L-Ala-gamma-D-Glu-L-Lys-D-Ala-D-Ala)](n)-di-trans,octa-cis-undecaprenyl diphosphate + beta-D-GlcNAc-(1-&gt;4)-Mur2Ac(oyl-L-Ala-gamma-D-Glu-L-Lys-D-Ala-D-Ala)-di-trans,octa-cis-undecaprenyl diphosphate = [GlcNAc-(1-&gt;4)-Mur2Ac(oyl-L-Ala-gamma-D-Glu-L-Lys-D-Ala-D-Ala)](n+1)-di-trans,octa-cis-undecaprenyl diphosphate + di-trans,octa-cis-undecaprenyl diphosphate + H(+). It carries out the reaction Preferential cleavage: (Ac)2-L-Lys-D-Ala-|-D-Ala. Also transpeptidation of peptidyl-alanyl moieties that are N-acyl substituents of D-alanine.. It participates in cell wall biogenesis; peptidoglycan biosynthesis. Cell wall formation. Synthesis of cross-linked peptidoglycan from the lipid intermediates. The enzyme has a penicillin-insensitive transglycosylase N-terminal domain (formation of linear glycan strands) and a penicillin-sensitive transpeptidase C-terminal domain (cross-linking of the peptide subunits). In Escherichia coli (strain K12), this protein is Penicillin-binding protein 1A (mrcA).